Reading from the N-terminus, the 864-residue chain is Leucine--tRNA ligase (864 aa).

The 'HIGH' region motif lies at 42–52; sequence PYPSGKLHMGH. Residues 622–626 carry the 'KMSKS' region motif; that stretch reads KMSKS. Position 625 (Lys-625) interacts with ATP.

It belongs to the class-I aminoacyl-tRNA synthetase family.

The protein resides in the cytoplasm. It carries out the reaction tRNA(Leu) + L-leucine + ATP = L-leucyl-tRNA(Leu) + AMP + diphosphate. This Cellvibrio japonicus (strain Ueda107) (Pseudomonas fluorescens subsp. cellulosa) protein is Leucine--tRNA ligase.